A 223-amino-acid chain; its full sequence is MGRGKIEIKRIENTTNRQVTFCKRRNGLLKKAYELSVLCDAEVALIVFSSRGRVYEYSNNNIKSTIDRYKKASSDSTNGGSTMEINAQYYQQESAKLRQQIQMLQNSNRHLMGDSLASLTVKELKQLENRLERGITRIRSKKHELLLAEIEYLQKREIELENESVYLRTKIAEVERLQQANMVSTHEFNAIQALVSLNFFQPNMIEGGSAGYPLPDKKVLHLG.

One can recognise an MADS-box domain in the interval 1–61 (MGRGKIEIKR…GRVYEYSNNN (61 aa)). The K-box domain occupies 87-177 (AQYYQQESAK…RTKIAEVERL (91 aa)).

The protein localises to the nucleus. Probable transcription factor involved in seed development. In Vitis vinifera (Grape), this protein is Agamous-like MADS-box protein AGL11.